Here is a 136-residue protein sequence, read N- to C-terminus: Large ribosomal subunit protein uL16c (136 aa).

It belongs to the universal ribosomal protein uL16 family. As to quaternary structure, part of the 50S ribosomal subunit.

The protein resides in the plastid. It localises to the chloroplast. The protein is Large ribosomal subunit protein uL16c of Saccharum hybrid (Sugarcane).